Reading from the N-terminus, the 255-residue chain is 5-oxoprolinase subunit A (255 aa).

This sequence belongs to the LamB/PxpA family. In terms of assembly, forms a complex composed of PxpA, PxpB and PxpC.

It carries out the reaction 5-oxo-L-proline + ATP + 2 H2O = L-glutamate + ADP + phosphate + H(+). In terms of biological role, catalyzes the cleavage of 5-oxoproline to form L-glutamate coupled to the hydrolysis of ATP to ADP and inorganic phosphate. This is 5-oxoprolinase subunit A from Nitrobacter hamburgensis (strain DSM 10229 / NCIMB 13809 / X14).